The following is a 322-amino-acid chain: HPr kinase/phosphorylase (322 aa).

Active-site residues include histidine 143 and lysine 164. Position 158–165 (158–165 (GRSGVGKS)) interacts with ATP. Serine 165 is a binding site for Mg(2+). The active-site Proton acceptor; for phosphorylation activity. Proton donor; for dephosphorylation activity is aspartate 182. Residues 206 to 215 (MEIRGLGILN) form an important for the catalytic mechanism of both phosphorylation and dephosphorylation region. Glutamate 207 is a Mg(2+) binding site. The active site involves arginine 250. The segment at 271 to 276 (PVKPGR) is important for the catalytic mechanism of dephosphorylation.

This sequence belongs to the HPrK/P family. As to quaternary structure, homohexamer. Mg(2+) is required as a cofactor.

The enzyme catalyses [HPr protein]-L-serine + ATP = [HPr protein]-O-phospho-L-serine + ADP + H(+). It carries out the reaction [HPr protein]-O-phospho-L-serine + phosphate + H(+) = [HPr protein]-L-serine + diphosphate. In terms of biological role, catalyzes the ATP- as well as the pyrophosphate-dependent phosphorylation of a specific serine residue in HPr, a phosphocarrier protein of the phosphoenolpyruvate-dependent sugar phosphotransferase system (PTS). HprK/P also catalyzes the pyrophosphate-producing, inorganic phosphate-dependent dephosphorylation (phosphorolysis) of seryl-phosphorylated HPr (P-Ser-HPr). The chain is HPr kinase/phosphorylase from Leptospira biflexa serovar Patoc (strain Patoc 1 / Ames).